Here is a 431-residue protein sequence, read N- to C-terminus: UPF0597 protein BVU_2091 (431 aa).

The protein belongs to the UPF0597 family.

The chain is UPF0597 protein BVU_2091 from Phocaeicola vulgatus (strain ATCC 8482 / DSM 1447 / JCM 5826 / CCUG 4940 / NBRC 14291 / NCTC 11154) (Bacteroides vulgatus).